A 502-amino-acid polypeptide reads, in one-letter code: Lysine--tRNA ligase (502 aa).

The Mg(2+) site is built by E413 and E420.

Belongs to the class-II aminoacyl-tRNA synthetase family. Homodimer. Mg(2+) is required as a cofactor.

The protein resides in the cytoplasm. It carries out the reaction tRNA(Lys) + L-lysine + ATP = L-lysyl-tRNA(Lys) + AMP + diphosphate. The polypeptide is Lysine--tRNA ligase (Haemophilus influenzae (strain PittEE)).